Consider the following 293-residue polypeptide: Acetyl-coenzyme A carboxylase carboxyl transferase subunit beta (293 aa).

The CoA carboxyltransferase N-terminal domain maps to 29–293; that stretch reads LWVKCSECSQ…GVKELAEANT (265 aa). The Zn(2+) site is built by cysteine 33, cysteine 36, cysteine 52, and cysteine 55. A C4-type zinc finger spans residues 33–55; the sequence is CSECSQVAYRKDLISNFNVCNNC.

It belongs to the AccD/PCCB family. In terms of assembly, acetyl-CoA carboxylase is a heterohexamer composed of biotin carboxyl carrier protein (AccB), biotin carboxylase (AccC) and two subunits each of ACCase subunit alpha (AccA) and ACCase subunit beta (AccD). It depends on Zn(2+) as a cofactor.

It localises to the cytoplasm. The catalysed reaction is N(6)-carboxybiotinyl-L-lysyl-[protein] + acetyl-CoA = N(6)-biotinyl-L-lysyl-[protein] + malonyl-CoA. It functions in the pathway lipid metabolism; malonyl-CoA biosynthesis; malonyl-CoA from acetyl-CoA: step 1/1. Component of the acetyl coenzyme A carboxylase (ACC) complex. Biotin carboxylase (BC) catalyzes the carboxylation of biotin on its carrier protein (BCCP) and then the CO(2) group is transferred by the transcarboxylase to acetyl-CoA to form malonyl-CoA. This Prochlorococcus marinus (strain AS9601) protein is Acetyl-coenzyme A carboxylase carboxyl transferase subunit beta.